The primary structure comprises 643 residues: 1-deoxy-D-xylulose-5-phosphate synthase (643 aa).

Thiamine diphosphate contacts are provided by residues histidine 78 and 119–121 (AHS). Residue aspartate 150 coordinates Mg(2+). Residues 151–152 (GS), asparagine 179, tyrosine 288, and glutamate 370 each bind thiamine diphosphate. Asparagine 179 contacts Mg(2+).

It belongs to the transketolase family. DXPS subfamily. In terms of assembly, homodimer. Mg(2+) is required as a cofactor. The cofactor is thiamine diphosphate.

It catalyses the reaction D-glyceraldehyde 3-phosphate + pyruvate + H(+) = 1-deoxy-D-xylulose 5-phosphate + CO2. It participates in metabolic intermediate biosynthesis; 1-deoxy-D-xylulose 5-phosphate biosynthesis; 1-deoxy-D-xylulose 5-phosphate from D-glyceraldehyde 3-phosphate and pyruvate: step 1/1. In terms of biological role, catalyzes the acyloin condensation reaction between C atoms 2 and 3 of pyruvate and glyceraldehyde 3-phosphate to yield 1-deoxy-D-xylulose-5-phosphate (DXP). In Brucella ovis (strain ATCC 25840 / 63/290 / NCTC 10512), this protein is 1-deoxy-D-xylulose-5-phosphate synthase.